A 138-amino-acid polypeptide reads, in one-letter code: MLSPKRTKFRKQHKGRIHGLAKGGTDLNFGSFGLKAVEPERVTARQIEAARRAITRHMKRQGRLWIRIFPDVPVSKKPAEVRMGSGKGSPEFWVARVKPGRVMFELDGVPEDIARGAFELAAAKLPLKTKFIARIGEV.

It belongs to the universal ribosomal protein uL16 family. As to quaternary structure, part of the 50S ribosomal subunit.

Its function is as follows. Binds 23S rRNA and is also seen to make contacts with the A and possibly P site tRNAs. The protein is Large ribosomal subunit protein uL16 of Rhodospirillum rubrum (strain ATCC 11170 / ATH 1.1.1 / DSM 467 / LMG 4362 / NCIMB 8255 / S1).